A 409-amino-acid polypeptide reads, in one-letter code: Arginine deiminase (409 aa).

Residue Cys399 is the Amidino-cysteine intermediate of the active site.

The protein belongs to the arginine deiminase family.

It localises to the cytoplasm. It catalyses the reaction L-arginine + H2O = L-citrulline + NH4(+). The protein operates within amino-acid degradation; L-arginine degradation via ADI pathway; carbamoyl phosphate from L-arginine: step 1/2. The sequence is that of Arginine deiminase (arcA) from Borreliella afzelii (Borrelia afzelii).